A 120-amino-acid chain; its full sequence is Adenosylhomocysteinase (120 aa).

Asparagine 34 is an NAD(+) binding site.

Belongs to the adenosylhomocysteinase family. Requires NAD(+) as cofactor.

Its subcellular location is the cytoplasm. It catalyses the reaction S-adenosyl-L-homocysteine + H2O = L-homocysteine + adenosine. Its pathway is amino-acid biosynthesis; L-homocysteine biosynthesis; L-homocysteine from S-adenosyl-L-homocysteine: step 1/1. May play a key role in the regulation of the intracellular concentration of adenosylhomocysteine. This is Adenosylhomocysteinase (ahcY) from Streptomyces fradiae (Streptomyces roseoflavus).